The chain runs to 330 residues: Ferredoxin--NADP reductase (330 aa).

Residues E35, Q43, Y48, V90, F123, D285, and T326 each contribute to the FAD site.

Belongs to the ferredoxin--NADP reductase type 2 family. As to quaternary structure, homodimer. Requires FAD as cofactor.

The enzyme catalyses 2 reduced [2Fe-2S]-[ferredoxin] + NADP(+) + H(+) = 2 oxidized [2Fe-2S]-[ferredoxin] + NADPH. The polypeptide is Ferredoxin--NADP reductase (Streptococcus pyogenes serotype M6 (strain ATCC BAA-946 / MGAS10394)).